A 339-amino-acid chain; its full sequence is DNA-directed RNA polymerase subunit alpha (339 aa).

Residues 1–233 are alpha N-terminal domain (alpha-NTD); that stretch reads MVREEVAGST…DLFLPFLHAE (233 aa). The alpha C-terminal domain (alpha-CTD) stretch occupies residues 264 to 339; the sequence is KKGIPLNCIF…IDLLKNKLSF (76 aa).

This sequence belongs to the RNA polymerase alpha chain family. As to quaternary structure, in plastids the minimal PEP RNA polymerase catalytic core is composed of four subunits: alpha, beta, beta', and beta''. When a (nuclear-encoded) sigma factor is associated with the core the holoenzyme is formed, which can initiate transcription.

Its subcellular location is the plastid. It is found in the chloroplast. The catalysed reaction is RNA(n) + a ribonucleoside 5'-triphosphate = RNA(n+1) + diphosphate. DNA-dependent RNA polymerase catalyzes the transcription of DNA into RNA using the four ribonucleoside triphosphates as substrates. The chain is DNA-directed RNA polymerase subunit alpha from Eremopyrum distans.